The sequence spans 652 residues: Apicoplast pyruvate carrier 2 (652 aa).

The Cytoplasmic segment spans residues 1 to 45; the sequence is MSAFPASPQPSAFPASPQPSAFPASPQPSASPVSPRHCVSPSSGT. The disordered stretch occupies residues 1-53; it reads MSAFPASPQPSAFPASPQPSAFPASPQPSASPVSPRHCVSPSSGTLPSSSSPS. 12 helical membrane passes run 46–66, 126–146, 167–187, 189–209, 212–232, 278–298, 345–365, 385–405, 417–437, 445–465, 467–487, and 515–535; these read LPSS…SSSS, NLLP…AVSY, GTTL…SAWM, LGLA…IAYG, TALG…KLSP, LPYL…SSLN, LVDP…AERQ, SCSA…ICSS, LSWQ…LYPE, AAPA…PRAL, SASR…SLTG, and LWGY…MNAL. The Cytoplasmic segment spans residues 536–652; that stretch reads TAPCLFALST…LPYRFPTYSP (117 aa).

Belongs to the major facilitator superfamily. Interacts with apicoplast pyruvate carrier 1.

It localises to the plastid. The protein localises to the apicoplast. The protein resides in the membrane. Its function is as follows. Along with apicoplast pyruvate carrier 1, forms apicoplast pyruvate carrier (APC) complex, which transports pyruvate into the apicoplast and may also transport amino acids like methionine, serine, glycine and tryptophan with low efficiency. Required for maintaining pyruvate-dependent metabolic activities in the apicoplast, such as synthesis of fatty acids, isopentenyl pyrophosphate (IPP), dimethylallyl pyrophosphate (DMAPP) and methylerythritol 4-phosphate (MEP). Required for maintaining the integrity of the apicoplast. Required for normal parasite growth. The protein is Apicoplast pyruvate carrier 2 of Toxoplasma gondii.